A 396-amino-acid chain; its full sequence is NADH-quinone oxidoreductase subunit D (396 aa).

The protein belongs to the complex I 49 kDa subunit family. As to quaternary structure, NDH-1 is composed of 14 different subunits. Subunits NuoB, C, D, E, F, and G constitute the peripheral sector of the complex.

It localises to the cell inner membrane. The catalysed reaction is a quinone + NADH + 5 H(+)(in) = a quinol + NAD(+) + 4 H(+)(out). Functionally, NDH-1 shuttles electrons from NADH, via FMN and iron-sulfur (Fe-S) centers, to quinones in the respiratory chain. The immediate electron acceptor for the enzyme in this species is believed to be ubiquinone. Couples the redox reaction to proton translocation (for every two electrons transferred, four hydrogen ions are translocated across the cytoplasmic membrane), and thus conserves the redox energy in a proton gradient. The chain is NADH-quinone oxidoreductase subunit D from Rhodopseudomonas palustris (strain BisA53).